The primary structure comprises 148 residues: MFDTTLLILLGLAALGFISHNTTVAISILVLIIVRVTPLNAFFPWVEKQGLTVGIIILTIGVMAPIASGTLPPSTLIHSFMNWKSLLAIAVGVFVSWLGGRGVSLMGSQPHLVAGLLVGTVLGVALFRGVPVGPLIAAGIISLFIGKS.

4 helical membrane passes run 14-34, 51-71, 86-106, and 121-141; these read ALGF…LIIV, LTVG…SGTL, LLAI…VSLM, and VLGV…AGII.

It belongs to the UPF0756 family.

The protein localises to the cell membrane. This is UPF0756 membrane protein KPN78578_11500 from Klebsiella pneumoniae subsp. pneumoniae (strain ATCC 700721 / MGH 78578).